Here is a 72-residue protein sequence, read N- to C-terminus: Translation initiation factor IF-1 (72 aa).

The 72-residue stretch at 1–72 (MSKDDVIQMQ…SRARIVFRAK (72 aa)) folds into the S1-like domain.

Belongs to the IF-1 family. Component of the 30S ribosomal translation pre-initiation complex which assembles on the 30S ribosome in the order IF-2 and IF-3, IF-1 and N-formylmethionyl-tRNA(fMet); mRNA recruitment can occur at any time during PIC assembly.

It is found in the cytoplasm. In terms of biological role, one of the essential components for the initiation of protein synthesis. Stabilizes the binding of IF-2 and IF-3 on the 30S subunit to which N-formylmethionyl-tRNA(fMet) subsequently binds. Helps modulate mRNA selection, yielding the 30S pre-initiation complex (PIC). Upon addition of the 50S ribosomal subunit IF-1, IF-2 and IF-3 are released leaving the mature 70S translation initiation complex. This chain is Translation initiation factor IF-1, found in Albidiferax ferrireducens (strain ATCC BAA-621 / DSM 15236 / T118) (Rhodoferax ferrireducens).